A 216-amino-acid polypeptide reads, in one-letter code: Pyrophosphatase PpaX (216 aa).

Aspartate 9 serves as the catalytic Nucleophile.

The protein belongs to the HAD-like hydrolase superfamily. PpaX family. Requires Mg(2+) as cofactor.

The catalysed reaction is diphosphate + H2O = 2 phosphate + H(+). Functionally, hydrolyzes pyrophosphate formed during P-Ser-HPr dephosphorylation by HPrK/P. Might play a role in controlling the intracellular pyrophosphate pool. The protein is Pyrophosphatase PpaX of Bacillus cereus (strain B4264).